Here is a 269-residue protein sequence, read N- to C-terminus: 4-hydroxy-tetrahydrodipicolinate reductase (269 aa).

Residues 8-13 and Glu34 contribute to the NAD(+) site; that span reads GAAGRM. Arg35 serves as a coordination point for NADP(+). NAD(+) is bound by residues 98–100 and 122–125; these read GTT and APNY. His155 acts as the Proton donor/acceptor in catalysis. A (S)-2,3,4,5-tetrahydrodipicolinate-binding site is contributed by His156. Lys159 serves as the catalytic Proton donor. 165–166 contacts (S)-2,3,4,5-tetrahydrodipicolinate; sequence GT.

Belongs to the DapB family.

Its subcellular location is the cytoplasm. The catalysed reaction is (S)-2,3,4,5-tetrahydrodipicolinate + NAD(+) + H2O = (2S,4S)-4-hydroxy-2,3,4,5-tetrahydrodipicolinate + NADH + H(+). The enzyme catalyses (S)-2,3,4,5-tetrahydrodipicolinate + NADP(+) + H2O = (2S,4S)-4-hydroxy-2,3,4,5-tetrahydrodipicolinate + NADPH + H(+). Its pathway is amino-acid biosynthesis; L-lysine biosynthesis via DAP pathway; (S)-tetrahydrodipicolinate from L-aspartate: step 4/4. Functionally, catalyzes the conversion of 4-hydroxy-tetrahydrodipicolinate (HTPA) to tetrahydrodipicolinate. In Vibrio vulnificus (strain CMCP6), this protein is 4-hydroxy-tetrahydrodipicolinate reductase.